Here is a 431-residue protein sequence, read N- to C-terminus: MITDRVSDYLEKIEKSDINAFIDLNGERVLKEAKDLEKNEKLKNKSLYGKIIAVKSNINVEGYKISCASKTLDNYTGTYDATVIKKLRSEGALIIGMTNMDEFASGSSGETSYYGPTKNPKALDRIPGGSSSGSAAAVSADLCDMALGSDTGGSIRNPASHCGVVGFKPTYGVVSRQGLCDLAMSFDQIGPLTKTAEDSLNLTNVIKGLDLSNTTSLKTPKFEKKEIKDYKIGVVREFMDVTDEKIRNEIEKGIEVFRDLGCEIVDLSYKYIDLALPTYYLINYVEFYSATRKYDGRRFGEVIEEACGEEVLRRILIGKHISEQEFSGKYYKKALQARKEMKKEMIGLFNSVDLIVGPTVPKLPHKIGEELSPMEMYAYDVLTVLTNICGICSGVVGCGNINGIPVGLQIQGASLDDEKVLSAMIEFENNY.

Active-site charge relay system residues include lysine 55 and serine 130. Serine 154 acts as the Acyl-ester intermediate in catalysis.

The protein belongs to the amidase family. GatA subfamily. As to quaternary structure, heterotrimer of A, B and C subunits.

The enzyme catalyses L-glutamyl-tRNA(Gln) + L-glutamine + ATP + H2O = L-glutaminyl-tRNA(Gln) + L-glutamate + ADP + phosphate + H(+). In terms of biological role, allows the formation of correctly charged Gln-tRNA(Gln) through the transamidation of misacylated Glu-tRNA(Gln) in organisms which lack glutaminyl-tRNA synthetase. The reaction takes place in the presence of glutamine and ATP through an activated gamma-phospho-Glu-tRNA(Gln). The polypeptide is Glutamyl-tRNA(Gln) amidotransferase subunit A (Methanococcus vannielii (strain ATCC 35089 / DSM 1224 / JCM 13029 / OCM 148 / SB)).